Consider the following 715-residue polypeptide: Macrolide export ATP-binding/permease protein MacB (715 aa).

Residues 4 to 245 form the ABC transporter domain; it reads IELQDIRKTY…VSKAAPAQSK (242 aa). An ATP-binding site is contributed by 40–47; sequence GTSGSGKT. The segment at 229–251 is disordered; the sequence is AVGDMPQVSKAAPAQSKPVHSAM. The next 4 helical transmembrane spans lie at 277 to 297, 592 to 612, 639 to 659, and 681 to 701; these read AALT…MMEI, LLLA…MNIM, QFLF…ILVG, and ILAA…YPAW.

The protein belongs to the ABC transporter superfamily. Macrolide exporter (TC 3.A.1.122) family. Homodimer.

The protein resides in the cell inner membrane. Non-canonical ABC transporter that contains transmembrane domains (TMD), which form a pore in the inner membrane, and an ATP-binding domain (NBD), which is responsible for energy generation. Confers resistance against macrolides. The protein is Macrolide export ATP-binding/permease protein MacB of Syntrophobacter fumaroxidans (strain DSM 10017 / MPOB).